A 500-amino-acid polypeptide reads, in one-letter code: Envelop protein OPG153 (500 aa).

A disulfide bond links cysteine 43 and cysteine 342.

This sequence belongs to the orthopoxvirus OPG153 protein family. Interacts with proteins OPG094 and OPG143. Interacts with OPG154. Interacts with OPG152. Interacts with host laminin.

It is found in the virion membrane. In terms of biological role, envelop protein that mediates acid-dependent endocytosis into host cells. Plays an important role in endocytic entry of the virus by acting as an acid-sensitive membrane fusion suppressor. Low pH in host endosomes triggers conformational changes to allow de-repression of viral fusion complex activity and membrane fusion within vesicles. Also plays a role in bridging the mature virion with structural protein OPG152. The sequence is that of Envelop protein OPG153 (OPG153) from Vaccinia virus (strain Western Reserve) (VACV).